The sequence spans 366 residues: Aminomethyltransferase (366 aa).

It belongs to the GcvT family. As to quaternary structure, the glycine cleavage system is composed of four proteins: P, T, L and H.

It catalyses the reaction N(6)-[(R)-S(8)-aminomethyldihydrolipoyl]-L-lysyl-[protein] + (6S)-5,6,7,8-tetrahydrofolate = N(6)-[(R)-dihydrolipoyl]-L-lysyl-[protein] + (6R)-5,10-methylene-5,6,7,8-tetrahydrofolate + NH4(+). In terms of biological role, the glycine cleavage system catalyzes the degradation of glycine. This is Aminomethyltransferase from Bordetella pertussis (strain Tohama I / ATCC BAA-589 / NCTC 13251).